A 535-amino-acid polypeptide reads, in one-letter code: Peptide chain release factor 3 (535 aa).

In terms of domain architecture, tr-type G spans 8–278 (ARRRTFAIIS…VDQAPAPGPR (271 aa)). Residues 17-24 (SHPDAGKT), 85-89 (DTPGH), and 139-142 (NKLD) contribute to the GTP site.

It belongs to the TRAFAC class translation factor GTPase superfamily. Classic translation factor GTPase family. PrfC subfamily.

It is found in the cytoplasm. Functionally, increases the formation of ribosomal termination complexes and stimulates activities of RF-1 and RF-2. It binds guanine nucleotides and has strong preference for UGA stop codons. It may interact directly with the ribosome. The stimulation of RF-1 and RF-2 is significantly reduced by GTP and GDP, but not by GMP. The sequence is that of Peptide chain release factor 3 from Bordetella parapertussis (strain 12822 / ATCC BAA-587 / NCTC 13253).